The sequence spans 441 residues: Amino-acid acetyltransferase (441 aa).

The 140-residue stretch at E295 to S434 folds into the N-acetyltransferase domain.

This sequence belongs to the acetyltransferase family. ArgA subfamily. As to quaternary structure, homohexamer.

Its subcellular location is the cytoplasm. The enzyme catalyses L-glutamate + acetyl-CoA = N-acetyl-L-glutamate + CoA + H(+). It participates in amino-acid biosynthesis; L-arginine biosynthesis; N(2)-acetyl-L-ornithine from L-glutamate: step 1/4. This is Amino-acid acetyltransferase from Serratia proteamaculans (strain 568).